A 100-amino-acid polypeptide reads, in one-letter code: uncharacterized protein (100 aa).

A run of 2 helical transmembrane segments spans residues 1–21 (MLVL…YKVK) and 54–74 (MILF…VIGA).

It localises to the cell membrane. This is an uncharacterized protein from Bacillus subtilis (strain 168).